The following is a 399-amino-acid chain: Putative cytochrome P450 133B2 (399 aa).

C348 contacts heme.

This sequence belongs to the cytochrome P450 family. The cofactor is heme.

The protein is Putative cytochrome P450 133B2 (cyp133B2) of Xylella fastidiosa (strain Temecula1 / ATCC 700964).